A 364-amino-acid polypeptide reads, in one-letter code: 3-isopropylmalate dehydrogenase (364 aa).

78–91 lines the NAD(+) pocket; that stretch reads GKKWDYLSIDKRPE. Residues Arg-99, Arg-109, Arg-138, and Asp-227 each contribute to the substrate site. The Mg(2+) site is built by Asp-227, Asp-251, and Asp-255. 285–297 provides a ligand contact to NAD(+); it reads GSAPDIAGKNIAN.

Belongs to the isocitrate and isopropylmalate dehydrogenases family. LeuB type 1 subfamily. As to quaternary structure, homodimer. Requires Mg(2+) as cofactor. It depends on Mn(2+) as a cofactor.

Its subcellular location is the cytoplasm. The catalysed reaction is (2R,3S)-3-isopropylmalate + NAD(+) = 4-methyl-2-oxopentanoate + CO2 + NADH. It functions in the pathway amino-acid biosynthesis; L-leucine biosynthesis; L-leucine from 3-methyl-2-oxobutanoate: step 3/4. Catalyzes the oxidation of 3-carboxy-2-hydroxy-4-methylpentanoate (3-isopropylmalate) to 3-carboxy-4-methyl-2-oxopentanoate. The product decarboxylates to 4-methyl-2 oxopentanoate. This chain is 3-isopropylmalate dehydrogenase, found in Buchnera aphidicola subsp. Uroleucon erigeronensis.